A 379-amino-acid chain; its full sequence is Odorant receptor 23a (379 aa).

Topologically, residues 1-36 are cytoplasmic; sequence MKLSETLKIDYFRVQLNAWRICGALDLSEGRYWSWS. The helical transmembrane segment at 37 to 57 threads the bilayer; sequence MLLCILVYLPTPMLLRGVYSF. Over 58–64 the chain is Extracellular; sequence EDPVENN. N64 carries N-linked (GlcNAc...) asparagine glycosylation. Residues 65 to 85 traverse the membrane as a helical segment; that stretch reads FSLSLTVTSLSNLMKFCMYVA. Residues 86–125 lie on the Cytoplasmic side of the membrane; that stretch reads QLTKMVEVQSLIGQLDARVSGESQSERHRNMTEHLLRMSK. Residues 126 to 146 traverse the membrane as a helical segment; the sequence is LFQITYAVVFIIAAVPFVFET. Topologically, residues 147 to 162 are extracellular; that stretch reads ELSLPMPMWFPFDWKN. Residues 163–183 traverse the membrane as a helical segment; it reads SMVAYIGALVFQEIGYVFQIM. Residues 184 to 253 lie on the Cytoplasmic side of the membrane; it reads QCFAADSFPP…TKSLVSYPMM (70 aa). The helical transmembrane segment at 254-274 threads the bilayer; the sequence is VQFMVIGINIAITLFVLIFYV. Over 275–280 the chain is Extracellular; it reads ETLYDR. A helical membrane pass occupies residues 281–301; that stretch reads IYYLCFLLGITVQTYPLCYYG. Topologically, residues 302 to 340 are cytoplasmic; it reads TMVQESFAELHYAVFCSNWVDQSASYRGHMLILAERTKR. A helical membrane pass occupies residues 341 to 361; it reads MQLLLAGNLVPIHLSTYVACW. The Extracellular portion of the chain corresponds to 362 to 379; sequence KGAYSFFTLMADRDGLGS.

The protein belongs to the insect chemoreceptor superfamily. Heteromeric odorant receptor channel (TC 1.A.69) family. Or2a subfamily. Interacts with Orco. Complexes exist early in the endomembrane system in olfactory sensory neurons (OSNs), coupling these complexes to the conserved ciliary trafficking pathway. As to expression, expressed in 10-40 sensory cells in the third antenna segment and in the maxillary palp.

The protein localises to the cell membrane. Odorant receptor which mediates acceptance or avoidance behavior, depending on its substrates. The odorant receptor repertoire encodes a large collection of odor stimuli that vary widely in identity, intensity, and duration. May form a complex with Orco to form odorant-sensing units, providing sensitive and prolonged odorant signaling and calcium permeability. This Drosophila melanogaster (Fruit fly) protein is Odorant receptor 23a (Or23a).